Consider the following 218-residue polypeptide: Large ribosomal subunit protein uL3 (218 aa).

Residues 126 to 163 form a disordered region; sequence HGFSRGPMTHGSKNHRQPGSIGAGTTPGRIYPGKRMSG.

Belongs to the universal ribosomal protein uL3 family. Part of the 50S ribosomal subunit. Forms a cluster with proteins L14 and L19.

Its function is as follows. One of the primary rRNA binding proteins, it binds directly near the 3'-end of the 23S rRNA, where it nucleates assembly of the 50S subunit. This chain is Large ribosomal subunit protein uL3, found in Synechococcus sp. (strain CC9311).